A 284-amino-acid polypeptide reads, in one-letter code: L-ribulose-5-phosphate 3-epimerase UlaE (284 aa).

It belongs to the L-ribulose-5-phosphate 3-epimerase family.

It catalyses the reaction L-ribulose 5-phosphate = L-xylulose 5-phosphate. Its pathway is cofactor degradation; L-ascorbate degradation; D-xylulose 5-phosphate from L-ascorbate: step 3/4. Its function is as follows. Catalyzes the isomerization of L-xylulose-5-phosphate to L-ribulose-5-phosphate. Is involved in the anaerobic L-ascorbate utilization. The chain is L-ribulose-5-phosphate 3-epimerase UlaE from Escherichia coli O8 (strain IAI1).